The primary structure comprises 445 residues: UDP-N-acetylmuramoylalanine--D-glutamate ligase (445 aa).

110–116 lines the ATP pocket; it reads GSNGKTT.

Belongs to the MurCDEF family.

Its subcellular location is the cytoplasm. The enzyme catalyses UDP-N-acetyl-alpha-D-muramoyl-L-alanine + D-glutamate + ATP = UDP-N-acetyl-alpha-D-muramoyl-L-alanyl-D-glutamate + ADP + phosphate + H(+). It participates in cell wall biogenesis; peptidoglycan biosynthesis. In terms of biological role, cell wall formation. Catalyzes the addition of glutamate to the nucleotide precursor UDP-N-acetylmuramoyl-L-alanine (UMA). This is UDP-N-acetylmuramoylalanine--D-glutamate ligase from Christiangramia forsetii (strain DSM 17595 / CGMCC 1.15422 / KT0803) (Gramella forsetii).